Consider the following 157-residue polypeptide: Small ribosomal subunit protein uS7 (157 aa).

Belongs to the universal ribosomal protein uS7 family. Part of the 30S ribosomal subunit. Contacts proteins S9 and S11.

In terms of biological role, one of the primary rRNA binding proteins, it binds directly to 16S rRNA where it nucleates assembly of the head domain of the 30S subunit. Is located at the subunit interface close to the decoding center, probably blocks exit of the E-site tRNA. This chain is Small ribosomal subunit protein uS7, found in Borrelia hermsii (strain HS1 / DAH).